Here is a 216-residue protein sequence, read N- to C-terminus: Adenylate kinase (216 aa).

Residue 10–15 (GAGKGT) coordinates ATP. The interval 30-59 (STGDIFRYNIKQGTELGKKAKSYMDQGLLV) is NMP. AMP contacts are provided by residues Thr-31, Arg-36, 57–59 (LLV), 85–88 (GFPR), and Gln-92. The segment at 126–163 (GRRICRECGATFHVQYNPSTKGALCDQCGGELYQRDDD) is LID. Arg-127 contacts ATP. Residues Cys-130 and Cys-133 each coordinate Zn(2+). Position 136-137 (136-137 (TF)) interacts with ATP. Zn(2+) contacts are provided by Cys-150 and Cys-153. Residues Arg-160 and Arg-171 each coordinate AMP. An ATP-binding site is contributed by Lys-199.

This sequence belongs to the adenylate kinase family. In terms of assembly, monomer.

Its subcellular location is the cytoplasm. The enzyme catalyses AMP + ATP = 2 ADP. The protein operates within purine metabolism; AMP biosynthesis via salvage pathway; AMP from ADP: step 1/1. In terms of biological role, catalyzes the reversible transfer of the terminal phosphate group between ATP and AMP. Plays an important role in cellular energy homeostasis and in adenine nucleotide metabolism. The chain is Adenylate kinase from Alkaliphilus oremlandii (strain OhILAs) (Clostridium oremlandii (strain OhILAs)).